A 77-amino-acid chain; its full sequence is Acyl carrier protein (77 aa).

The Carrier domain occupies 2 to 77 (STVEERVKKI…DAIDYILANQ (76 aa)). At S37 the chain carries O-(pantetheine 4'-phosphoryl)serine.

This sequence belongs to the acyl carrier protein (ACP) family. In terms of processing, 4'-phosphopantetheine is transferred from CoA to a specific serine of apo-ACP by AcpS. This modification is essential for activity because fatty acids are bound in thioester linkage to the sulfhydryl of the prosthetic group.

The protein resides in the cytoplasm. The protein operates within lipid metabolism; fatty acid biosynthesis. Its function is as follows. Carrier of the growing fatty acid chain in fatty acid biosynthesis. This Hahella chejuensis (strain KCTC 2396) protein is Acyl carrier protein.